Reading from the N-terminus, the 334-residue chain is Ketol-acid reductoisomerase (NADP(+)) (334 aa).

The KARI N-terminal Rossmann domain occupies 3–183 (ATIYYENDAD…GGTRGGVIET (181 aa)). Residues 26-29 (YGSQ), R49, S52, and 84-87 (DEVQ) each bind NADP(+). Residue H109 is part of the active site. G135 contacts NADP(+). The KARI C-terminal knotted domain occupies 184–329 (TFAEETETDL…LGLRRMMNWI (146 aa)). Positions 192, 196, 228, and 232 each coordinate Mg(2+). S253 contacts substrate.

It belongs to the ketol-acid reductoisomerase family. Mg(2+) serves as cofactor.

The enzyme catalyses (2R)-2,3-dihydroxy-3-methylbutanoate + NADP(+) = (2S)-2-acetolactate + NADPH + H(+). The catalysed reaction is (2R,3R)-2,3-dihydroxy-3-methylpentanoate + NADP(+) = (S)-2-ethyl-2-hydroxy-3-oxobutanoate + NADPH + H(+). Its pathway is amino-acid biosynthesis; L-isoleucine biosynthesis; L-isoleucine from 2-oxobutanoate: step 2/4. It participates in amino-acid biosynthesis; L-valine biosynthesis; L-valine from pyruvate: step 2/4. Functionally, involved in the biosynthesis of branched-chain amino acids (BCAA). Catalyzes an alkyl-migration followed by a ketol-acid reduction of (S)-2-acetolactate (S2AL) to yield (R)-2,3-dihydroxy-isovalerate. In the isomerase reaction, S2AL is rearranged via a Mg-dependent methyl migration to produce 3-hydroxy-3-methyl-2-ketobutyrate (HMKB). In the reductase reaction, this 2-ketoacid undergoes a metal-dependent reduction by NADPH to yield (R)-2,3-dihydroxy-isovalerate. The chain is Ketol-acid reductoisomerase (NADP(+)) from Rhodopirellula baltica (strain DSM 10527 / NCIMB 13988 / SH1).